An 888-amino-acid chain; its full sequence is Villin-like protein quail (888 aa).

One copy of the Gelsolin-like repeat lies at 307–366 (GVYLLDNYGQSIWLWVGGQAPQADALSAMGNGRAFVKKKKYPDNTLVVRVLEGHEPVEFK). One can recognise an HP domain in the interval 823–888 (FDGHKKYPLT…MELKKQFKLF (66 aa)).

The protein belongs to the villin/gelsolin family. As to expression, germline specific in adult flies.

Required for the formation of cytoplasmic actin filament bundles in nurse cells, possibly by regulating both the polymerization and organization of actin filaments. Mutations in quail result in female sterility due to the disruption of cytoplasmic transport from the nurse cells into the oocyte late in oogenesis. The protein is Villin-like protein quail (qua) of Drosophila melanogaster (Fruit fly).